The following is a 346-amino-acid chain: Small ribosomal subunit biogenesis GTPase RsgA 1 (346 aa).

A CP-type G domain is found at 93 to 248 (AEQLIAANFD…VIDTPGMREF (156 aa)). Residues 138–141 (TKAD) and 190–198 (GSSGVGKSS) contribute to the GTP site. The Zn(2+) site is built by Cys271, Cys276, His278, and Cys284.

This sequence belongs to the TRAFAC class YlqF/YawG GTPase family. RsgA subfamily. In terms of assembly, monomer. Associates with 30S ribosomal subunit, binds 16S rRNA. Zn(2+) is required as a cofactor.

The protein localises to the cytoplasm. Its function is as follows. One of several proteins that assist in the late maturation steps of the functional core of the 30S ribosomal subunit. Helps release RbfA from mature subunits. May play a role in the assembly of ribosomal proteins into the subunit. Circularly permuted GTPase that catalyzes slow GTP hydrolysis, GTPase activity is stimulated by the 30S ribosomal subunit. The polypeptide is Small ribosomal subunit biogenesis GTPase RsgA 1 (Listeria monocytogenes serovar 1/2a (strain ATCC BAA-679 / EGD-e)).